The chain runs to 774 residues: Probable ubiquitin-like-specific protease 2A (774 aa).

The interval 118–141 (SSLSENDEVSTGEATNPASDPHEV) is disordered. Catalysis depends on residues H400, D430, and C485. The segment at 548–568 (ILPANSKSEPPHCGVSNRNDQ) is disordered.

It belongs to the peptidase C48 family.

Protease that catalyzes two essential functions in the SUMO pathway: processing of full-length SUMOs to their mature forms and deconjugation of SUMO from targeted proteins. In Arabidopsis thaliana (Mouse-ear cress), this protein is Probable ubiquitin-like-specific protease 2A (ULP2A).